We begin with the raw amino-acid sequence, 511 residues long: Maturase K (511 aa).

The protein belongs to the intron maturase 2 family. MatK subfamily.

The protein resides in the plastid. Its subcellular location is the chloroplast. In terms of biological role, usually encoded in the trnK tRNA gene intron. Probably assists in splicing its own and other chloroplast group II introns. The polypeptide is Maturase K (Hordeum secalinum (Meadow barley)).